The chain runs to 292 residues: UPF0282 protein MJ1629 (292 aa).

The protein belongs to the UPF0282 family.

This chain is UPF0282 protein MJ1629, found in Methanocaldococcus jannaschii (strain ATCC 43067 / DSM 2661 / JAL-1 / JCM 10045 / NBRC 100440) (Methanococcus jannaschii).